The sequence spans 510 residues: Zinc finger and SCAN domain-containing protein 18 (510 aa).

Positions 1-40 (MLPLEKAFASPRSSPAPPDLPTPGSAAGVQQEEPETIPER) are disordered. The SCAN box domain maps to 49 to 131 (RLRFREFVYQ…SLVEGLADVL (83 aa)). Disordered stretches follow at residues 172-191 (ALGA…SPDP), 201-231 (EAKT…EWGH), 263-413 (TEEL…GKPY), and 461-510 (KTHE…EAQR). 2 stretches are compositionally biased toward basic and acidic residues: residues 214–231 (QKLK…EWGH) and 263–273 (TEELRLVERDP). A compositionally biased stretch (low complexity) spans 288–299 (AGCACEEAAPAG). Residues 344–356 (DSATGSQRQSVIQ) are compositionally biased toward polar residues. C2H2-type zinc fingers lie at residues 413-435 (YACG…HSSH) and 441-463 (YACQ…QKTH). The span at 491 to 501 (GGPPESVEGEA) shows a compositional bias: low complexity.

Belongs to the krueppel C2H2-type zinc-finger protein family.

It is found in the nucleus. In terms of biological role, may be involved in transcriptional regulation. In Homo sapiens (Human), this protein is Zinc finger and SCAN domain-containing protein 18 (ZSCAN18).